We begin with the raw amino-acid sequence, 107 residues long: Large ribosomal subunit protein eL21 (107 aa).

Belongs to the eukaryotic ribosomal protein eL21 family.

The sequence is that of Large ribosomal subunit protein eL21 (rpl21e) from Aeropyrum pernix (strain ATCC 700893 / DSM 11879 / JCM 9820 / NBRC 100138 / K1).